We begin with the raw amino-acid sequence, 69 residues long: Conotoxin AbVIF (69 aa).

The first 17 residues, 1-17, serve as a signal peptide directing secretion; that stretch reads VLIIAVLFLTACQLTTA. Residues 18 to 40 constitute a propeptide that is removed on maturation; the sequence is ETSSRGKQKHRALRSTDKNSRMS. Residues 20-41 form a disordered region; sequence SSRGKQKHRALRSTDKNSRMSK. 3 cysteine pairs are disulfide-bonded: C43-C57, C50-C61, and C56-C68.

This sequence belongs to the conotoxin O1 superfamily. Expressed by the venom duct.

The protein localises to the secreted. This is Conotoxin AbVIF from Conus abbreviatus (Abbreviated cone).